The sequence spans 86 residues: Omega-theraphotoxin-Hhn1c (86 aa).

The signal sequence occupies residues M1–A21. Positions S22–R50 are excised as a propeptide. Intrachain disulfides connect C52/C66, C59/C71, and C65/C78.

This sequence belongs to the neurotoxin 10 (Hwtx-1) family. 17 (Hntx-9) subfamily. Expressed by the venom gland.

It localises to the secreted. Functionally, ion channel inhibitor. In Cyriopagopus hainanus (Chinese bird spider), this protein is Omega-theraphotoxin-Hhn1c.